A 416-amino-acid polypeptide reads, in one-letter code: 4-hydroxy-3-methylbut-2-en-1-yl diphosphate synthase (flavodoxin) (416 aa).

Residues C304, C307, C350, and E357 each contribute to the [4Fe-4S] cluster site.

It belongs to the IspG family. The cofactor is [4Fe-4S] cluster.

It carries out the reaction (2E)-4-hydroxy-3-methylbut-2-enyl diphosphate + oxidized [flavodoxin] + H2O + 2 H(+) = 2-C-methyl-D-erythritol 2,4-cyclic diphosphate + reduced [flavodoxin]. Its pathway is isoprenoid biosynthesis; isopentenyl diphosphate biosynthesis via DXP pathway; isopentenyl diphosphate from 1-deoxy-D-xylulose 5-phosphate: step 5/6. Functionally, converts 2C-methyl-D-erythritol 2,4-cyclodiphosphate (ME-2,4cPP) into 1-hydroxy-2-methyl-2-(E)-butenyl 4-diphosphate. The chain is 4-hydroxy-3-methylbut-2-en-1-yl diphosphate synthase (flavodoxin) from Burkholderia pseudomallei (strain K96243).